A 378-amino-acid polypeptide reads, in one-letter code: Erythronate-4-phosphate dehydrogenase (378 aa).

2 residues coordinate substrate: serine 45 and threonine 66. An NAD(+)-binding site is contributed by aspartate 146. The active site involves arginine 207. Residue aspartate 231 coordinates NAD(+). Glutamate 236 is an active-site residue. Histidine 253 (proton donor) is an active-site residue. An NAD(+)-binding site is contributed by glycine 256.

Belongs to the D-isomer specific 2-hydroxyacid dehydrogenase family. PdxB subfamily. In terms of assembly, homodimer.

It is found in the cytoplasm. The enzyme catalyses 4-phospho-D-erythronate + NAD(+) = (R)-3-hydroxy-2-oxo-4-phosphooxybutanoate + NADH + H(+). Its pathway is cofactor biosynthesis; pyridoxine 5'-phosphate biosynthesis; pyridoxine 5'-phosphate from D-erythrose 4-phosphate: step 2/5. In terms of biological role, catalyzes the oxidation of erythronate-4-phosphate to 3-hydroxy-2-oxo-4-phosphonooxybutanoate. The protein is Erythronate-4-phosphate dehydrogenase of Wigglesworthia glossinidia brevipalpis.